Consider the following 204-residue polypeptide: Quinol oxidase subunit 3 (204 aa).

A run of 6 helical transmembrane segments spans residues 27-47 (FWIF…TFFV), 66-86 (LVMI…IAVH), 95-115 (GVVI…GCEI), 118-138 (FVHY…SGFF), 140-160 (LLGT…GILI), and 184-204 (FLDV…LGGL).

It belongs to the cytochrome c oxidase subunit 3 family.

It is found in the cell membrane. It catalyses the reaction 2 a quinol + O2 = 2 a quinone + 2 H2O. Catalyzes quinol oxidation with the concomitant reduction of oxygen to water. Major component for energy conversion during vegetative growth. The protein is Quinol oxidase subunit 3 (qoxC) of Bacillus subtilis (strain 168).